Reading from the N-terminus, the 309-residue chain is Homoserine kinase (309 aa).

91–101 (PIGSGLGSSAC) lines the ATP pocket.

The protein belongs to the GHMP kinase family. Homoserine kinase subfamily.

The protein localises to the cytoplasm. It catalyses the reaction L-homoserine + ATP = O-phospho-L-homoserine + ADP + H(+). It functions in the pathway amino-acid biosynthesis; L-threonine biosynthesis; L-threonine from L-aspartate: step 4/5. Functionally, catalyzes the ATP-dependent phosphorylation of L-homoserine to L-homoserine phosphate. In Escherichia fergusonii (strain ATCC 35469 / DSM 13698 / CCUG 18766 / IAM 14443 / JCM 21226 / LMG 7866 / NBRC 102419 / NCTC 12128 / CDC 0568-73), this protein is Homoserine kinase.